A 69-amino-acid polypeptide reads, in one-letter code: Light-harvesting protein B-870 beta chain (69 aa).

Positions 1 to 2 (MA) are excised as a propeptide. Over 3–22 (EVKQESLSGITEGEAKEFHK) the chain is Cytoplasmic. Residues His-21 and His-39 each coordinate a bacteriochlorophyll. The helical transmembrane segment at 23–45 (IFTSSILVFFGVAAFAHLLVWIW) threads the bilayer. Topologically, residues 46-56 (RPWVPGPNGYS) are periplasmic. The propeptide occupies 57–69 (ALETLTQTLTYLS).

This sequence belongs to the antenna complex beta subunit family. The core complex is formed by different alpha and beta chains, binding bacteriochlorophyll molecules, and arranged most probably in tetrameric structures disposed around the reaction center. The non-pigmented gamma chains may constitute additional components.

The protein localises to the cell inner membrane. Antenna complexes are light-harvesting systems, which transfer the excitation energy to the reaction centers. The sequence is that of Light-harvesting protein B-870 beta chain from Rhodospirillum rubrum (strain ATCC 11170 / ATH 1.1.1 / DSM 467 / LMG 4362 / NCIMB 8255 / S1).